Reading from the N-terminus, the 446-residue chain is C4-dicarboxylate transport protein (446 aa).

9 helical membrane-spanning segments follow: residues 25-45 (VQVL…PAIG), 58-78 (LVKM…IASI), 93-113 (FAYF…VANV), 159-179 (ALTE…GLAL), 199-219 (VFFG…FGAM), 236-256 (LLIA…LGAV), 322-342 (IYMT…LSLG), 370-390 (AATL…ILGI), and 400-420 (LTNF…EKGL).

The protein belongs to the dicarboxylate/amino acid:cation symporter (DAACS) (TC 2.A.23) family.

It localises to the cell inner membrane. In terms of biological role, responsible for the transport of dicarboxylates such as succinate, fumarate, and malate from the periplasm across the membrane. This Sphingopyxis alaskensis (strain DSM 13593 / LMG 18877 / RB2256) (Sphingomonas alaskensis) protein is C4-dicarboxylate transport protein.